The primary structure comprises 275 residues: Large ribosomal subunit protein uL2 (275 aa).

Positions 225 to 275 (MNPIDHPHGGGEGRTSGGRHPVTPWGKPTKGKKTRSNKKTDRLIMRRRQTQ) are disordered.

This sequence belongs to the universal ribosomal protein uL2 family. Part of the 50S ribosomal subunit. Forms a bridge to the 30S subunit in the 70S ribosome.

Its function is as follows. One of the primary rRNA binding proteins. Required for association of the 30S and 50S subunits to form the 70S ribosome, for tRNA binding and peptide bond formation. It has been suggested to have peptidyltransferase activity; this is somewhat controversial. Makes several contacts with the 16S rRNA in the 70S ribosome. In Paramagnetospirillum magneticum (strain ATCC 700264 / AMB-1) (Magnetospirillum magneticum), this protein is Large ribosomal subunit protein uL2.